We begin with the raw amino-acid sequence, 400 residues long: Lysophospholipid transporter LplT (400 aa).

Helical transmembrane passes span 19–39, 53–73, 91–111, 139–159, 164–184, 195–213, 227–247, 257–277, 281–301, 304–324, 352–372, and 373–393; these read VIVA…ATLA, VLQM…GQIA, AGAA…LVGI, LMEA…GVLA, IAAL…NLFI, SWRL…VVLW, LFWG…PVAL, YLNA…AKLV, TVSR…IFSL, ALLP…FFVV, NSAM…GVPA, and VAIG…LWIW.

It belongs to the major facilitator superfamily. LplT (TC 2.A.1.42) family.

It localises to the cell inner membrane. Its function is as follows. Catalyzes the facilitated diffusion of 2-acyl-glycero-3-phosphoethanolamine (2-acyl-GPE) into the cell. This chain is Lysophospholipid transporter LplT, found in Salmonella typhi.